The chain runs to 181 residues: GTPase RhebL1 (181 aa).

GTP-binding positions include 30-36 (LEDYDPT), glycine 61, 117-120 (NKAD), and 147-148 (SA). Positions 33–41 (YDPTVENTY) match the Effector region motif. Threonine 36 lines the Mg(2+) pocket. Cysteine methyl ester is present on cysteine 178. Cysteine 178 carries S-farnesyl cysteine lipidation. Residues 179-181 (HLM) constitute a propeptide, removed in mature form.

This sequence belongs to the small GTPase superfamily. Rheb family. As to quaternary structure, interacts with MTOR.

It localises to the endomembrane system. The protein resides in the cytoplasm. It catalyses the reaction GTP + H2O = GDP + phosphate + H(+). Its function is as follows. Binds GTP and exhibits intrinsic GTPase activity. May activate NF-kappa-B-mediated gene transcription. Promotes signal transduction through MTOR, activates RPS6KB1, and is a downstream target of the small GTPase-activating proteins TSC1 and TSC2. This chain is GTPase RhebL1 (RHEBL1), found in Bos taurus (Bovine).